The primary structure comprises 519 residues: 2,3-bisphosphoglycerate-independent phosphoglycerate mutase (519 aa).

Residues aspartate 18 and serine 68 each coordinate Mn(2+). Catalysis depends on serine 68, which acts as the Phosphoserine intermediate. Residues histidine 129, 159–160 (RD), arginine 191, arginine 197, 267–270 (RADR), and lysine 341 contribute to the substrate site. Mn(2+)-binding residues include aspartate 408, histidine 412, aspartate 449, histidine 450, and histidine 468.

It belongs to the BPG-independent phosphoglycerate mutase family. As to quaternary structure, monomer. It depends on Mn(2+) as a cofactor.

It carries out the reaction (2R)-2-phosphoglycerate = (2R)-3-phosphoglycerate. It participates in carbohydrate degradation; glycolysis; pyruvate from D-glyceraldehyde 3-phosphate: step 3/5. In terms of biological role, catalyzes the interconversion of 2-phosphoglycerate and 3-phosphoglycerate. The protein is 2,3-bisphosphoglycerate-independent phosphoglycerate mutase of Coxiella burnetii (strain RSA 493 / Nine Mile phase I).